A 224-amino-acid polypeptide reads, in one-letter code: Small ribosomal subunit protein uS3 (224 aa).

The region spanning 38-106 (IRKFISKKLK…QVHINIVEIK (69 aa)) is the KH type-2 domain.

Belongs to the universal ribosomal protein uS3 family. In terms of assembly, part of the 30S ribosomal subunit. Forms a tight complex with proteins S10 and S14.

Its function is as follows. Binds the lower part of the 30S subunit head. Binds mRNA in the 70S ribosome, positioning it for translation. This Lactobacillus helveticus (strain DPC 4571) protein is Small ribosomal subunit protein uS3.